The primary structure comprises 212 residues: uncharacterized protein (212 aa).

Positions 1 to 18 are cleaved as a signal peptide; that stretch reads MQLTQVLAVAILAAGVSA. The tract at residues 108 to 180 is disordered; it reads VSHNRVNAKQ…KDYGHKDYGH (73 aa). Positions 117-180 are enriched in basic and acidic residues; sequence QRRDDKKDYG…KDYGHKDYGH (64 aa). The tract at residues 120-210 is 15 X 5 AA tandem repeats of K-D-Y-G-H; the sequence is DDKKDYGKND…KDYGYKGYDD (91 aa). Repeat unit 1 spans residues 123 to 127; the sequence is KDYGK. Residues 128 to 132 form a 2; truncated repeat; that stretch reads NDYGK. A run of 3 repeats spans residues 133 to 137, 138 to 142, and 143 to 147. Residues 148–152 form a 6; truncated repeat; it reads KEYDP. 5 repeat units span residues 166–170, 171–175, 176–180, 181–185, and 186–190. The stretch at 191–195 is one 12; truncated repeat; the sequence is DDYGY. A 13; truncated repeat occupies 196 to 200; that stretch reads KGYDD. The stretch at 201 to 205 is one 14; truncated repeat; that stretch reads KDYGY. Residues 206–210 form a 15; truncated repeat; sequence KGYDD.

Its subcellular location is the secreted. This is an uncharacterized protein from Arthroderma benhamiae (strain ATCC MYA-4681 / CBS 112371) (Trichophyton mentagrophytes).